A 175-amino-acid polypeptide reads, in one-letter code: Large ribosomal subunit protein uL10 (175 aa).

This sequence belongs to the universal ribosomal protein uL10 family. Part of the ribosomal stalk of the 50S ribosomal subunit. The N-terminus interacts with L11 and the large rRNA to form the base of the stalk. The C-terminus forms an elongated spine to which L12 dimers bind in a sequential fashion forming a multimeric L10(L12)X complex.

Forms part of the ribosomal stalk, playing a central role in the interaction of the ribosome with GTP-bound translation factors. The sequence is that of Large ribosomal subunit protein uL10 from Psychrobacter cryohalolentis (strain ATCC BAA-1226 / DSM 17306 / VKM B-2378 / K5).